The following is a 337-amino-acid chain: Glyceraldehyde-3-phosphate dehydrogenase (337 aa).

NAD(+) is bound by residues 12–13 (RI), Asp-34, and Lys-79. D-glyceraldehyde 3-phosphate contacts are provided by residues 150 to 152 (SCT), Thr-181, 210 to 211 (TG), and Arg-233. Catalysis depends on Cys-151, which acts as the Nucleophile. Asn-315 is a binding site for NAD(+).

This sequence belongs to the glyceraldehyde-3-phosphate dehydrogenase family. As to quaternary structure, homotetramer.

The protein resides in the cytoplasm. It catalyses the reaction D-glyceraldehyde 3-phosphate + phosphate + NAD(+) = (2R)-3-phospho-glyceroyl phosphate + NADH + H(+). It functions in the pathway carbohydrate degradation; glycolysis; pyruvate from D-glyceraldehyde 3-phosphate: step 1/5. This chain is Glyceraldehyde-3-phosphate dehydrogenase (GPD), found in Phanerodontia chrysosporium (White-rot fungus).